We begin with the raw amino-acid sequence, 383 residues long: Protein delta homolog 2 (383 aa).

An N-terminal signal peptide occupies residues 1 to 26 (MPSGCRCLHLVCLLCILAAPVKPVRA). 4 EGF-like domains span residues 27–58 (DDCS…LHCE), 62–89 (RMPG…KFCD), 91–129 (DEHV…RDCE), and 131–172 (KEGP…AHCE). Topologically, residues 27 to 306 (DDCSSHCDLA…RQEAGLGKSS (280 aa)) are extracellular. 17 cysteine pairs are disulfide-bonded: Cys29-Cys40, Cys33-Cys46, Cys48-Cys57, Cys66-Cys71, Cys79-Cys88, Cys95-Cys107, Cys101-Cys117, Cys119-Cys128, Cys135-Cys148, Cys142-Cys160, Cys162-Cys171, Cys178-Cys189, Cys183-Cys198, Cys200-Cys209, Cys216-Cys227, Cys221-Cys236, and Cys238-Cys247. Asn157 carries N-linked (GlcNAc...) asparagine glycosylation. Positions 174–210 (NVDDCLMRPCANGATCLDGINRFSCLCPEGFAGRFCT) constitute an EGF-like 5; calcium-binding domain. The 37-residue stretch at 212–248 (NLDDCASRPCQRGARCRDRVHDFDCLCPSGYGGKTCE) folds into the EGF-like 6; calcium-binding domain. A helical membrane pass occupies residues 307-327 (LVAVVVFGAVTATLVLSTVLL). At 328–383 (TLRAWRRGVCPPGPCCYPAPHYAPARQDQECQVSMLPAGLPLPPDLPPEPGKTTAL) the chain is on the cytoplasmic side.

The protein resides in the membrane. Regulates adipogenesis. The protein is Protein delta homolog 2 (DLK2) of Sus scrofa (Pig).